Here is a 267-residue protein sequence, read N- to C-terminus: Protein PERCC1 (267 aa).

3 disordered regions span residues 19–88, 142–163, and 247–267; these read HHPF…QLLR, SLED…RPGL, and ACPE…PAEA. Positions 28–50 are enriched in acidic residues; it reads EPPETSEEEEEEEEEEEEEEGEG. Low complexity predominate over residues 74–83; sequence PEGPGSPETP.

Functionally, plays a critical role in intestinal function. Acts by promoting the development of enteroendocrine cells (EECs) of the gastrointestinal tract and pancreas. It is thereby required for normal enteroendocrine peptide hormone secretion. The polypeptide is Protein PERCC1 (Homo sapiens (Human)).